The sequence spans 107 residues: Large ribosomal subunit protein uL23 (107 aa).

This sequence belongs to the universal ribosomal protein uL23 family. As to quaternary structure, part of the 50S ribosomal subunit. Contacts protein L29, and trigger factor when it is bound to the ribosome.

One of the early assembly proteins it binds 23S rRNA. One of the proteins that surrounds the polypeptide exit tunnel on the outside of the ribosome. Forms the main docking site for trigger factor binding to the ribosome. The protein is Large ribosomal subunit protein uL23 of Gluconobacter oxydans (strain 621H) (Gluconobacter suboxydans).